A 275-amino-acid chain; its full sequence is NH(3)-dependent NAD(+) synthetase (275 aa).

46 to 53 is an ATP binding site; it reads GISGGQDS. Residue D52 coordinates Mg(2+). Deamido-NAD(+) is bound at residue R140. Residue T160 participates in ATP binding. E165 serves as a coordination point for Mg(2+). 2 residues coordinate deamido-NAD(+): K173 and D180. The ATP site is built by K189 and T211. 260–261 is a binding site for deamido-NAD(+); that stretch reads HK.

The protein belongs to the NAD synthetase family. In terms of assembly, homodimer.

It catalyses the reaction deamido-NAD(+) + NH4(+) + ATP = AMP + diphosphate + NAD(+) + H(+). Its pathway is cofactor biosynthesis; NAD(+) biosynthesis; NAD(+) from deamido-NAD(+) (ammonia route): step 1/1. Its function is as follows. Catalyzes the ATP-dependent amidation of deamido-NAD to form NAD. Uses ammonia as a nitrogen source. In Escherichia fergusonii (strain ATCC 35469 / DSM 13698 / CCUG 18766 / IAM 14443 / JCM 21226 / LMG 7866 / NBRC 102419 / NCTC 12128 / CDC 0568-73), this protein is NH(3)-dependent NAD(+) synthetase.